The primary structure comprises 330 residues: MADEQQRRAQDGGSARDRHVPVMMERTLELLAPALSKGPAVVVDATLGMGGHSEALLAAHPELTLVGLDRDPDALRLAGERLAPHSDRVHLVHAVYDEWAEALAGLSLSKVDGALFDLGVSSLQLDETDRGFAYAHDAPLDMRMDSGAPRTAADVLNTYSAGELTRVLREYGEEKFAARIAAAIVRERAKAPFDRSGRLVELLYDAVPAASRRTGGHPAKRTFQALRIEVNAELEVLGRALPAALDSLAVGGRMVVMSYHSLEDRMVKRAFAERAKSKTPVDLPVELPGHGPEIRLLTRGAELASDAETAANPRAASVRLRAAERIKEAV.

S-adenosyl-L-methionine is bound by residues Gly-50–His-52, Asp-69, Leu-103, Asp-117, and Gln-124.

The protein belongs to the methyltransferase superfamily. RsmH family.

The protein localises to the cytoplasm. The catalysed reaction is cytidine(1402) in 16S rRNA + S-adenosyl-L-methionine = N(4)-methylcytidine(1402) in 16S rRNA + S-adenosyl-L-homocysteine + H(+). Functionally, specifically methylates the N4 position of cytidine in position 1402 (C1402) of 16S rRNA. This chain is Ribosomal RNA small subunit methyltransferase H, found in Saccharopolyspora erythraea (strain ATCC 11635 / DSM 40517 / JCM 4748 / NBRC 13426 / NCIMB 8594 / NRRL 2338).